Here is a 177-residue protein sequence, read N- to C-terminus: ATP synthase subunit delta (177 aa).

This sequence belongs to the ATPase delta chain family. As to quaternary structure, F-type ATPases have 2 components, F(1) - the catalytic core - and F(0) - the membrane proton channel. F(1) has five subunits: alpha(3), beta(3), gamma(1), delta(1), epsilon(1). F(0) has three main subunits: a(1), b(2) and c(10-14). The alpha and beta chains form an alternating ring which encloses part of the gamma chain. F(1) is attached to F(0) by a central stalk formed by the gamma and epsilon chains, while a peripheral stalk is formed by the delta and b chains.

Its subcellular location is the cell inner membrane. In terms of biological role, f(1)F(0) ATP synthase produces ATP from ADP in the presence of a proton or sodium gradient. F-type ATPases consist of two structural domains, F(1) containing the extramembraneous catalytic core and F(0) containing the membrane proton channel, linked together by a central stalk and a peripheral stalk. During catalysis, ATP synthesis in the catalytic domain of F(1) is coupled via a rotary mechanism of the central stalk subunits to proton translocation. Its function is as follows. This protein is part of the stalk that links CF(0) to CF(1). It either transmits conformational changes from CF(0) to CF(1) or is implicated in proton conduction. The sequence is that of ATP synthase subunit delta from Glaesserella parasuis serovar 5 (strain SH0165) (Haemophilus parasuis).